The primary structure comprises 240 residues: tRNA (guanine-N(1)-)-methyltransferase (240 aa).

Residues Gly-111 and 130–135 contribute to the S-adenosyl-L-methionine site; that span reads IGDYVI.

The protein belongs to the RNA methyltransferase TrmD family. In terms of assembly, homodimer.

The protein localises to the cytoplasm. The catalysed reaction is guanosine(37) in tRNA + S-adenosyl-L-methionine = N(1)-methylguanosine(37) in tRNA + S-adenosyl-L-homocysteine + H(+). In terms of biological role, specifically methylates guanosine-37 in various tRNAs. This is tRNA (guanine-N(1)-)-methyltransferase from Mycoplasma capricolum subsp. capricolum (strain California kid / ATCC 27343 / NCTC 10154).